A 396-amino-acid polypeptide reads, in one-letter code: Probable circularly permuted 1,3-beta-glucanase YJL171C (396 aa).

The N-terminal stretch at 1-19 is a signal peptide; that stretch reads MLQSIVLSVCMFMLHTVAA. Residues N51, N99, N122, N146, N174, N219, and N249 are each glycosylated (N-linked (GlcNAc...) asparagine). The ExDxxE motif signature appears at 259-264; sequence EYDIFE. Residues N267, N300, N328, and N346 are each glycosylated (N-linked (GlcNAc...) asparagine). A lipid anchor (GPI-anchor amidated asparagine) is attached at N368. Positions 369–396 are cleaved as a propeptide — removed in mature form; sequence GVALTKMQNGVWYYILAIFTAFTQVVLI.

Belongs to the PGA52 family. In terms of processing, extensively N-glycosylated.

The protein resides in the cell membrane. The enzyme catalyses Hydrolysis of (1-&gt;3)-beta-D-glucosidic linkages in (1-&gt;3)-beta-D-glucans.. Probable circularly permuted 1,3-beta-glucanase involved in cell wall modification through beta-1,3-glucan network alterations such as increased branching or remodeling. This chain is Probable circularly permuted 1,3-beta-glucanase YJL171C (TOH1), found in Saccharomyces cerevisiae (strain ATCC 204508 / S288c) (Baker's yeast).